A 273-amino-acid chain; its full sequence is Formamidopyrimidine-DNA glycosylase (273 aa).

The Schiff-base intermediate with DNA role is filled by Pro2. Catalysis depends on Glu3, which acts as the Proton donor. Catalysis depends on Lys58, which acts as the Proton donor; for beta-elimination activity. DNA-binding residues include His91 and Arg110. The FPG-type zinc finger occupies 238–272; it reads QVYGKTGQPCPRCGCLIKKIKVGGRGTHYCPRCQC. Arg262 functions as the Proton donor; for delta-elimination activity in the catalytic mechanism.

Belongs to the FPG family. In terms of assembly, monomer. Zn(2+) serves as cofactor.

The catalysed reaction is Hydrolysis of DNA containing ring-opened 7-methylguanine residues, releasing 2,6-diamino-4-hydroxy-5-(N-methyl)formamidopyrimidine.. It carries out the reaction 2'-deoxyribonucleotide-(2'-deoxyribose 5'-phosphate)-2'-deoxyribonucleotide-DNA = a 3'-end 2'-deoxyribonucleotide-(2,3-dehydro-2,3-deoxyribose 5'-phosphate)-DNA + a 5'-end 5'-phospho-2'-deoxyribonucleoside-DNA + H(+). In terms of biological role, involved in base excision repair of DNA damaged by oxidation or by mutagenic agents. Acts as a DNA glycosylase that recognizes and removes damaged bases. Has a preference for oxidized purines, such as 7,8-dihydro-8-oxoguanine (8-oxoG). Has AP (apurinic/apyrimidinic) lyase activity and introduces nicks in the DNA strand. Cleaves the DNA backbone by beta-delta elimination to generate a single-strand break at the site of the removed base with both 3'- and 5'-phosphates. The polypeptide is Formamidopyrimidine-DNA glycosylase (Streptococcus agalactiae serotype Ia (strain ATCC 27591 / A909 / CDC SS700)).